A 366-amino-acid chain; its full sequence is UDP-N-acetylglucosamine--N-acetylmuramyl-(pentapeptide) pyrophosphoryl-undecaprenol N-acetylglucosamine transferase (366 aa).

Residues 14–16 (TGG), Asn125, Arg168, Ser196, and Gln297 each bind UDP-N-acetyl-alpha-D-glucosamine.

It belongs to the glycosyltransferase 28 family. MurG subfamily.

Its subcellular location is the cell inner membrane. It carries out the reaction di-trans,octa-cis-undecaprenyl diphospho-N-acetyl-alpha-D-muramoyl-L-alanyl-D-glutamyl-meso-2,6-diaminopimeloyl-D-alanyl-D-alanine + UDP-N-acetyl-alpha-D-glucosamine = di-trans,octa-cis-undecaprenyl diphospho-[N-acetyl-alpha-D-glucosaminyl-(1-&gt;4)]-N-acetyl-alpha-D-muramoyl-L-alanyl-D-glutamyl-meso-2,6-diaminopimeloyl-D-alanyl-D-alanine + UDP + H(+). The protein operates within cell wall biogenesis; peptidoglycan biosynthesis. Its function is as follows. Cell wall formation. Catalyzes the transfer of a GlcNAc subunit on undecaprenyl-pyrophosphoryl-MurNAc-pentapeptide (lipid intermediate I) to form undecaprenyl-pyrophosphoryl-MurNAc-(pentapeptide)GlcNAc (lipid intermediate II). The chain is UDP-N-acetylglucosamine--N-acetylmuramyl-(pentapeptide) pyrophosphoryl-undecaprenol N-acetylglucosamine transferase from Rhodopseudomonas palustris (strain BisB5).